Reading from the N-terminus, the 334-residue chain is tRNA-dihydrouridine synthase B (334 aa).

FMN contacts are provided by residues 16–18 (PMA) and Gln70. Cys100 (proton donor) is an active-site residue. Residues Lys139, 200 to 202 (NGD), and 224 to 225 (GR) contribute to the FMN site.

Belongs to the Dus family. DusB subfamily. Requires FMN as cofactor.

It carries out the reaction a 5,6-dihydrouridine in tRNA + NAD(+) = a uridine in tRNA + NADH + H(+). The enzyme catalyses a 5,6-dihydrouridine in tRNA + NADP(+) = a uridine in tRNA + NADPH + H(+). Catalyzes the synthesis of 5,6-dihydrouridine (D), a modified base found in the D-loop of most tRNAs, via the reduction of the C5-C6 double bond in target uridines. This is tRNA-dihydrouridine synthase B from Serratia marcescens.